The primary structure comprises 251 residues: Probable transcriptional regulatory protein DehaBAV1_0421 (251 aa).

This sequence belongs to the TACO1 family.

It localises to the cytoplasm. In Dehalococcoides mccartyi (strain ATCC BAA-2100 / JCM 16839 / KCTC 5957 / BAV1), this protein is Probable transcriptional regulatory protein DehaBAV1_0421.